Consider the following 176-residue polypeptide: Nutrient stress-induced DNA-binding protein (176 aa).

The protein belongs to the Dps family. In terms of assembly, hexamer.

Involved in protection of chromosomal DNA from damage under nutrient-limited and oxidative stress conditions. Binds heme. The protein is Nutrient stress-induced DNA-binding protein (dpsA) of Synechococcus sp. (strain ATCC 27144 / PCC 6301 / SAUG 1402/1) (Anacystis nidulans).